We begin with the raw amino-acid sequence, 376 residues long: NIF3-like protein 1 (376 aa).

An N6-acetyllysine modification is found at Lys108. The tract at residues 243 to 376 (LLLHTGMGRL…ETDRDPLRVV (134 aa)) is mediates interaction with COPS2. The residue at position 254 (Thr254) is a Phosphothreonine. Position 258 is a phosphoserine (Ser258).

Belongs to the GTP cyclohydrolase I type 2/NIF3 family. As to quaternary structure, homodimer. Interacts with COPS2. Interacts with THOC7. In terms of tissue distribution, ubiquitous. Detected in all tissues tested with higher expression in cerebellum, heart and kidney and to a lower level in cerebrum, lung, liver, spleen and muscle.

The protein resides in the cytoplasm. The protein localises to the nucleus. Its function is as follows. May function as a transcriptional corepressor through its interaction with COPS2, negatively regulating the expression of genes involved in neuronal differentiation. The polypeptide is NIF3-like protein 1 (Mus musculus (Mouse)).